A 378-amino-acid polypeptide reads, in one-letter code: Peptide chain release factor RF2 (378 aa).

Position 253 is an N5-methylglutamine (glutamine 253).

It belongs to the prokaryotic/mitochondrial release factor family. As to quaternary structure, interacts with the ribosome. Interacts with ribosomal protein L11. Recruited to stalled E.coli ribosomes by E.coli ArfA.

It is found in the cytoplasm. In terms of biological role, peptide chain release factor 2 directs the termination of translation in response to the peptide chain termination codons UGA and UAA. In endogenous ribosomes interacts with P-site tRNA and 23S rRNA. In the presence of truncated mRNA in the 70S ribosome, ArfA and RF2 interact such that the GGQ peptide hydrolysis motif of RF2 rises into the peptidyl-transferase center and releases the ribosome. Recruited to stalled E.coli 70S ribosomes by E.coli ArfA, but cannot be functionally accomodated in the peptidyl-transferase center. Note T.thermophilus probably does not encode arfA. The sequence is that of Peptide chain release factor RF2 (prfB) from Thermus thermophilus (strain ATCC 27634 / DSM 579 / HB8).